A 170-amino-acid chain; its full sequence is ATP synthase subunit b (170 aa).

Residues 30-50 (FFFVLAIFLVVLGVIGTFVVP) traverse the membrane as a helical segment.

Belongs to the ATPase B chain family. In terms of assembly, F-type ATPases have 2 components, F(1) - the catalytic core - and F(0) - the membrane proton channel. F(1) has five subunits: alpha(3), beta(3), gamma(1), delta(1), epsilon(1). F(0) has three main subunits: a(1), b(2) and c(10-14). The alpha and beta chains form an alternating ring which encloses part of the gamma chain. F(1) is attached to F(0) by a central stalk formed by the gamma and epsilon chains, while a peripheral stalk is formed by the delta and b chains.

The protein resides in the cell membrane. F(1)F(0) ATP synthase produces ATP from ADP in the presence of a proton or sodium gradient. F-type ATPases consist of two structural domains, F(1) containing the extramembraneous catalytic core and F(0) containing the membrane proton channel, linked together by a central stalk and a peripheral stalk. During catalysis, ATP synthesis in the catalytic domain of F(1) is coupled via a rotary mechanism of the central stalk subunits to proton translocation. Functionally, component of the F(0) channel, it forms part of the peripheral stalk, linking F(1) to F(0). This chain is ATP synthase subunit b, found in Mycobacterium leprae (strain TN).